The following is a 123-amino-acid chain: Succinate dehydrogenase assembly factor 3, mitochondrial (123 aa).

The N-terminal 31 residues, 1–31 (MANPAHISAVRTLYKKILVLHRFLPIDLRAL), are a transit peptide targeting the mitochondrion.

This sequence belongs to the complex I LYR family. SDHAF3 subfamily. As to quaternary structure, interacts with sdhb within an sdha-sdhb subcomplex.

The protein resides in the mitochondrion matrix. Functionally, plays an essential role in the assembly of succinate dehydrogenase (SDH), an enzyme complex (also referred to as respiratory complex II) that is a component of both the tricarboxylic acid (TCA) cycle and the mitochondrial electron transport chain, and which couples the oxidation of succinate to fumarate with the reduction of ubiquinone (coenzyme Q) to ubiquinol. Promotes maturation of the iron-sulfur protein subunit sdhb of the SDH catalytic dimer, protecting it from the deleterious effects of oxidants. May act together with SDHAF1. The protein is Succinate dehydrogenase assembly factor 3, mitochondrial of Danio rerio (Zebrafish).